The following is a 392-amino-acid chain: Methylthioribose-1-phosphate isomerase (392 aa).

Asp-267 acts as the Proton donor in catalysis.

It belongs to the eIF-2B alpha/beta/delta subunits family. MtnA subfamily.

The protein localises to the cytoplasm. It is found in the nucleus. It catalyses the reaction 5-(methylsulfanyl)-alpha-D-ribose 1-phosphate = 5-(methylsulfanyl)-D-ribulose 1-phosphate. It participates in amino-acid biosynthesis; L-methionine biosynthesis via salvage pathway; L-methionine from S-methyl-5-thio-alpha-D-ribose 1-phosphate: step 1/6. In terms of biological role, catalyzes the interconversion of methylthioribose-1-phosphate (MTR-1-P) into methylthioribulose-1-phosphate (MTRu-1-P). The protein is Methylthioribose-1-phosphate isomerase of Ajellomyces dermatitidis (strain ER-3 / ATCC MYA-2586) (Blastomyces dermatitidis).